Here is a 170-residue protein sequence, read N- to C-terminus: Protein SOB FIVE-LIKE 5 (170 aa).

An SOFL-A motif is present at residues Ser-10–Tyr-15. The segment at Asp-17–Ser-78 is disordered. A compositionally biased stretch (basic and acidic residues) spans Asp-35–Trp-44. Residues Ser-61–Pro-70 carry the SOFL-B motif. The Nuclear localization signal motif lies at Val-79–Gly-86.

It belongs to the SOFL plant protein family. Expressed in seedlings, roots, flowers and siliques. Barely detectable in leaves.

It localises to the cytoplasm. It is found in the nucleus. Involved in cytokinin-mediated development. The chain is Protein SOB FIVE-LIKE 5 from Arabidopsis thaliana (Mouse-ear cress).